We begin with the raw amino-acid sequence, 147 residues long: Deoxyuridine 5'-triphosphate nucleotidohydrolase (147 aa).

Residues 67 to 69 (RSG), N80, and 84 to 86 (TID) each bind substrate.

Belongs to the dUTPase family. It depends on Mg(2+) as a cofactor.

The catalysed reaction is dUTP + H2O = dUMP + diphosphate + H(+). It functions in the pathway pyrimidine metabolism; dUMP biosynthesis; dUMP from dCTP (dUTP route): step 2/2. Its function is as follows. This enzyme is involved in nucleotide metabolism: it produces dUMP, the immediate precursor of thymidine nucleotides and it decreases the intracellular concentration of dUTP so that uracil cannot be incorporated into DNA. The sequence is that of Deoxyuridine 5'-triphosphate nucleotidohydrolase from Anaplasma marginale (strain St. Maries).